Here is a 99-residue protein sequence, read N- to C-terminus: Complement inhibitor RaCI7 (99 aa).

The N-terminal stretch at Met-1–Ser-24 is a signal peptide. Disulfide bonds link Cys-37–Cys-61, Cys-42–Cys-63, and Cys-57–Cys-78.

This sequence belongs to the RaCI family. As to expression, expressed in salivary glands.

It is found in the secreted. In terms of biological role, complement inhibitor. Prevents complement-mediated C5 activation by binding to C5. Binds C5 at a different binding site than the other tick complement inhibitors OmCI and CirpT1, and the drug eculizumab. This chain is Complement inhibitor RaCI7, found in Dermacentor andersoni (Rocky mountain wood tick).